The following is a 211-amino-acid chain: N-(5'-phosphoribosyl)anthranilate isomerase (211 aa).

The protein belongs to the TrpF family.

It carries out the reaction N-(5-phospho-beta-D-ribosyl)anthranilate = 1-(2-carboxyphenylamino)-1-deoxy-D-ribulose 5-phosphate. Its pathway is amino-acid biosynthesis; L-tryptophan biosynthesis; L-tryptophan from chorismate: step 3/5. The polypeptide is N-(5'-phosphoribosyl)anthranilate isomerase (Pseudomonas aeruginosa (strain LESB58)).